Reading from the N-terminus, the 458-residue chain is UDP-N-acetylmuramate--L-alanine ligase (458 aa).

112–118 (GTHGKTT) is an ATP binding site.

This sequence belongs to the MurCDEF family.

The protein resides in the cytoplasm. The catalysed reaction is UDP-N-acetyl-alpha-D-muramate + L-alanine + ATP = UDP-N-acetyl-alpha-D-muramoyl-L-alanine + ADP + phosphate + H(+). It functions in the pathway cell wall biogenesis; peptidoglycan biosynthesis. Functionally, cell wall formation. The protein is UDP-N-acetylmuramate--L-alanine ligase of Geotalea uraniireducens (strain Rf4) (Geobacter uraniireducens).